A 613-amino-acid polypeptide reads, in one-letter code: MASRPGFLTDWPWTPLGSFKYLLLAPLVFDSIYSYATIRDHEKLLIVAVTVWRIVHSQIWISLSRYQTAKGTKRILNKSIEFDQVDRERTWDDQIIFNTLIVYLTKVYVSGTSTIPFWRTDGVILVALLHAGPVEFIYYWFHRALHHHFLYSRYHSHHHSSIVTEPITSVVHPFAEHIGYTLILGLPLITTFMCGTVSVVSIALYLTYIDFMNNMGHCNFELIPKFLFSLLPPLKFLCYTPSFHSLHHTQFRTNYSLFMPMYDYIYGTTDECSDSLYETSLEKEEEKPDAIHLTHLTSLDSIYHLRLGFASLSSHPLSSRCYLFLMKPFALILSFILRSFSFQTFVVERNRFRDLTLHSHLLPKFSSHYMSHQQKECINKMIEAAILEADKKGVKVMSLGLLNQGEELNGYGEMYVRRHPKLKIRIVDGGSLAAEVVLHSIPVGTKEVLFRGQITKVARAIVFSLCQNAIKVMVLRKEEHSMLAEFLDDKCKENLIWLVGDGLSTKEQKMAKDGTLFLPFSQFPPKTLRKDCFYHTTPAMIIPHSAQNIDSCENWLGRRVMSAWRVGGIVHALEGWKEHECGLDDNSIINPPRVWEAALRNGFQPLLLPSLET.

The next 6 membrane-spanning stretches (helical) occupy residues 13-33 (WTPLGSFKYLLLAPLVFDSIY), 44-64 (LLIVAVTVWRIVHSQIWISLS), 95-115 (IIFNTLIVYLTKVYVSGTSTI), 122-142 (GVILVALLHAGPVEFIYYWFH), 182-202 (LILGLPLITTFMCGTVSVVSI), and 322-342 (YLFLMKPFALILSFILRSFSF). The Fatty acid hydroxylase domain maps to 134–268 (VEFIYYWFHR…MPMYDYIYGT (135 aa)).

This sequence belongs to the sterol desaturase family. In terms of tissue distribution, not detected in any tissues.

Its subcellular location is the membrane. This chain is Protein CER1-like 2, found in Arabidopsis thaliana (Mouse-ear cress).